We begin with the raw amino-acid sequence, 207 residues long: Glycerol-3-phosphate acyltransferase (207 aa).

The next 5 membrane-spanning stretches (helical) occupy residues 3-23 (LIGLLIVAYLLGAIPNGVWVG), 54-74 (TIVMVLDIAKGSVATLLPIVF), 81-101 (GTATPLLFGLFAVLGHTVSIF), 122-142 (PIMFVIAAGFWVSLIYWTSIV), and 158-178 (LVFQDWYLTGIALVLTVFVFY).

It belongs to the PlsY family. In terms of assembly, probably interacts with PlsX.

The protein localises to the cell membrane. It carries out the reaction an acyl phosphate + sn-glycerol 3-phosphate = a 1-acyl-sn-glycero-3-phosphate + phosphate. The protein operates within lipid metabolism; phospholipid metabolism. Catalyzes the transfer of an acyl group from acyl-phosphate (acyl-PO(4)) to glycerol-3-phosphate (G3P) to form lysophosphatidic acid (LPA). This enzyme utilizes acyl-phosphate as fatty acyl donor, but not acyl-CoA or acyl-ACP. In Levilactobacillus brevis (strain ATCC 367 / BCRC 12310 / CIP 105137 / JCM 1170 / LMG 11437 / NCIMB 947 / NCTC 947) (Lactobacillus brevis), this protein is Glycerol-3-phosphate acyltransferase.